Reading from the N-terminus, the 105-residue chain is Large ribosomal subunit protein uL24 (105 aa).

This sequence belongs to the universal ribosomal protein uL24 family. Part of the 50S ribosomal subunit.

One of two assembly initiator proteins, it binds directly to the 5'-end of the 23S rRNA, where it nucleates assembly of the 50S subunit. Functionally, one of the proteins that surrounds the polypeptide exit tunnel on the outside of the subunit. The protein is Large ribosomal subunit protein uL24 of Staphylococcus aureus (strain Mu3 / ATCC 700698).